The sequence spans 316 residues: Arabinooligosaccharides transport system permease protein AraP (316 aa).

7 consecutive transmembrane segments (helical) span residues 32 to 52 (VVPYVLISPFILSFIVLSFYP), 94 to 114 (TYMILTVVILVSIPMLFAVLL), 128 to 148 (ALFLPALTSVIVAGMVFRLMF), 178 to 198 (MFLMVVLASWRWMGINILYFL), 224 to 244 (FYVTLPFLKPVTIFVTTISVI), 254 to 274 (FVFWEAGSPGNIGLTIVGYLY), and 283 to 303 (MGFGAAIGVVLMLIIFVISIT). The ABC transmembrane type-1 domain occupies 89 to 304 (LQNTTTYMIL…LIIFVISITQ (216 aa)).

It belongs to the binding-protein-dependent transport system permease family. MalFG subfamily. As to quaternary structure, the complex is composed of two ATP-binding proteins (MsmX), two transmembrane proteins (AraP and AraQ) and a solute-binding protein (AraN).

It localises to the cell membrane. In terms of biological role, part of the ABC transporter complex AraNPQ involved in the uptake of arabinooligosaccharides. Responsible for the translocation of the substrate across the membrane. The protein is Arabinooligosaccharides transport system permease protein AraP (araP) of Halalkalibacterium halodurans (strain ATCC BAA-125 / DSM 18197 / FERM 7344 / JCM 9153 / C-125) (Bacillus halodurans).